Here is a 150-residue protein sequence, read N- to C-terminus: Endoribonuclease YbeY (150 aa).

Residues histidine 102, histidine 106, and histidine 112 each coordinate Zn(2+).

Belongs to the endoribonuclease YbeY family. The cofactor is Zn(2+).

The protein localises to the cytoplasm. In terms of biological role, single strand-specific metallo-endoribonuclease involved in late-stage 70S ribosome quality control and in maturation of the 3' terminus of the 16S rRNA. The sequence is that of Endoribonuclease YbeY from Thermotoga maritima (strain ATCC 43589 / DSM 3109 / JCM 10099 / NBRC 100826 / MSB8).